The chain runs to 188 residues: Transcription factor E (188 aa).

The HTH TFE/IIEalpha-type domain occupies 9 to 98; it reads DLEVLRDVTL…SWRLNLREVL (90 aa).

This sequence belongs to the TFE family. As to quaternary structure, monomer. Interaction with RNA polymerase subunits RpoF and RpoE is necessary for Tfe stimulatory transcription activity. Able to interact with Tbp and RNA polymerase in the absence of DNA promoter. Interacts both with the preinitiation and elongation complexes.

In terms of biological role, transcription factor that plays a role in the activation of archaeal genes transcribed by RNA polymerase. Facilitates transcription initiation by enhancing TATA-box recognition by TATA-box-binding protein (Tbp), and transcription factor B (Tfb) and RNA polymerase recruitment. Not absolutely required for transcription in vitro, but particularly important in cases where Tbp or Tfb function is not optimal. It dynamically alters the nucleic acid-binding properties of RNA polymerases by stabilizing the initiation complex and destabilizing elongation complexes. Seems to translocate with the RNA polymerase following initiation and acts by binding to the non template strand of the transcription bubble in elongation complexes. The protein is Transcription factor E of Methanopyrus kandleri (strain AV19 / DSM 6324 / JCM 9639 / NBRC 100938).